Consider the following 179-residue polypeptide: Large ribosomal subunit protein uL5 (179 aa).

It belongs to the universal ribosomal protein uL5 family. Part of the 50S ribosomal subunit; part of the 5S rRNA/L5/L18/L25 subcomplex. Contacts the 5S rRNA and the P site tRNA. Forms a bridge to the 30S subunit in the 70S ribosome.

Functionally, this is one of the proteins that bind and probably mediate the attachment of the 5S RNA into the large ribosomal subunit, where it forms part of the central protuberance. In the 70S ribosome it contacts protein S13 of the 30S subunit (bridge B1b), connecting the 2 subunits; this bridge is implicated in subunit movement. Contacts the P site tRNA; the 5S rRNA and some of its associated proteins might help stabilize positioning of ribosome-bound tRNAs. The polypeptide is Large ribosomal subunit protein uL5 (Shewanella piezotolerans (strain WP3 / JCM 13877)).